The sequence spans 505 residues: MAKQPTALIILDGFANRESEHGNAVKQAHKPNFDRYYEKYPTTQIEASGLDVGLPEGQMGNSEVGHMNIGAGRIVYQSLTRINKSIEDGEFFDNTVLNNAVKHVKDNGSALHVFGLLSDGGVHSHYKHLFAILELAKKQGIDKVYVHAFLDGRDVDQKSALKYIEETEDKFKELGVGQFASVSGRYYAMDRDKRWDREERAYNAIRNFEGPTFTSAKAGVEANYKNDVTDEFVEPFIVEGQNDGVNDGDAVIFYNFRPDRAAQLSEIFTNKAFDGFKVEQVDNLFYATFTKYNDNVDAEIVFEKVDLNNTIGEVAQDNGLKQLRIAETEKYPHVTYFMSGGRNEEFEGERRRLIDSPKVATYDLKPEMSAYEVKDALLEELDKGDLDLILLNFANPDMVGHSGMLEPTIKAIEAVDECLGEVVDKIIDMGGHAIITADHGNSDQVLTDDDQPMTTHTTNPVPVIVTKEGVTLRETGRLGDLAPTLLDLLNVKQPSEMTGESLIKH.

Mn(2+)-binding residues include Asp-12 and Ser-62. Ser-62 (phosphoserine intermediate) is an active-site residue. Substrate-binding positions include His-123, 153 to 154 (RD), Arg-185, Arg-191, 257 to 260 (RPDR), and Lys-330. Mn(2+) is bound by residues Asp-397, His-401, Asp-438, His-439, and His-456.

This sequence belongs to the BPG-independent phosphoglycerate mutase family. In terms of assembly, monomer. Mn(2+) serves as cofactor.

The catalysed reaction is (2R)-2-phosphoglycerate = (2R)-3-phosphoglycerate. The protein operates within carbohydrate degradation; glycolysis; pyruvate from D-glyceraldehyde 3-phosphate: step 3/5. Functionally, catalyzes the interconversion of 2-phosphoglycerate and 3-phosphoglycerate. This Staphylococcus epidermidis (strain ATCC 35984 / DSM 28319 / BCRC 17069 / CCUG 31568 / BM 3577 / RP62A) protein is 2,3-bisphosphoglycerate-independent phosphoglycerate mutase.